Reading from the N-terminus, the 356-residue chain is MSRPIVATINRAALRQNLAIARQAAGGSRLWSVVKANAYGHGIDRVWQSLAETDGFALLNLEEAILLRERGWKKPILLLEGFFHPADLEILDRYRLTTSVHSNWQIKALAEAKLSAPLDIYLKMNSGMNRLGFQPEQVNNAWQKLRSLKNVGELTLMAHFADAESTEGVAEPLKRIEQAAEGLECPRSLANSAATLWHPQTHHDWVRPGIILYGASPSGRWQDIAGSGLQPVMTLTSEIIGVQQLAAGSCVGYGSRYRASGSQRIGVVACGYADGYPRHAPTGTPIRVDGEMTQVVGAVSMDMITVDLTPCPQAGIGSQVELWGNSVKIDDVASASGTVGYELMCALAQRVPVQTE.

Catalysis depends on lysine 35, which acts as the Proton acceptor; specific for D-alanine. Lysine 35 is subject to N6-(pyridoxal phosphate)lysine. Arginine 130 serves as a coordination point for substrate. The active-site Proton acceptor; specific for L-alanine is tyrosine 253. Methionine 301 provides a ligand contact to substrate.

This sequence belongs to the alanine racemase family. The cofactor is pyridoxal 5'-phosphate.

It carries out the reaction L-alanine = D-alanine. It functions in the pathway amino-acid biosynthesis; D-alanine biosynthesis; D-alanine from L-alanine: step 1/1. In terms of biological role, catalyzes the interconversion of L-alanine and D-alanine. May also act on other amino acids. This chain is Alanine racemase (alr), found in Erwinia tasmaniensis (strain DSM 17950 / CFBP 7177 / CIP 109463 / NCPPB 4357 / Et1/99).